Consider the following 224-residue polypeptide: MNYFRYKQFNKDVITVAVGYYLRYALSYRDISEILRGRGVNVHHSTVYRWVQEYAPILYQIWKKKHKKAYYKWRIDETYIKIKGKWSYLYRAIDAEGHTLDIWLRKQRDNHSAYAFIKRLIKQFGKPQKVITDQAPSTKVAMAKVIKAFKLKPDCHCTSKYLNNLIEQDHRHIKVRKTRYQSINTAKNTLKGIECIYALYKKNRRSLQIYGFSPCHEISIMLAS.

Residues 33-52 constitute a DNA-binding region (H-T-H motif); sequence EILRGRGVNVHHSTVYRWVQ. Residues 73 to 222 enclose the Integrase catalytic domain; that stretch reads WRIDETYIKI…SPCHEISIML (150 aa).

Its function is as follows. Involved in the transposition of the insertion sequence. In Staphylococcus aureus, this protein is Transposase for insertion sequence element IS257 in transposon Tn4003.